The following is a 176-amino-acid chain: Ribosome rescue factor SmrB (176 aa).

Positions 93-168 (LDLHGYRQSE…GDAALLVLID (76 aa)) constitute a Smr domain.

It belongs to the SmrB family. As to quaternary structure, associates with collided ribosomes, but not with correctly translating polysomes.

In terms of biological role, acts as a ribosome collision sensor. Detects stalled/collided disomes (pairs of ribosomes where the leading ribosome is stalled and a second ribosome has collided with it) and endonucleolytically cleaves mRNA at the 5' boundary of the stalled ribosome. Stalled/collided disomes form a new interface (primarily via the 30S subunits) that binds SmrB. Cleaved mRNA becomes available for tmRNA ligation, leading to ribosomal subunit dissociation and rescue of stalled ribosomes. The polypeptide is Ribosome rescue factor SmrB (Shewanella putrefaciens (strain CN-32 / ATCC BAA-453)).